We begin with the raw amino-acid sequence, 540 residues long: Phosphoenolpyruvate carboxykinase (ATP) (540 aa).

Arginine 65 contributes to the substrate binding site. At lysine 87 the chain carries N6-acetyllysine. 2 residues coordinate substrate: tyrosine 207 and lysine 213. Residues lysine 213, histidine 232, and 248-256 (GLSGTGKTT) contribute to the ATP site. Lysine 213 and histidine 232 together coordinate Mn(2+). Mn(2+) is bound at residue aspartate 269. Residues glutamate 297, arginine 333, 449–450 (RI), and threonine 455 each bind ATP. Arginine 333 lines the substrate pocket. Lysine 523 carries the post-translational modification N6-acetyllysine.

The protein belongs to the phosphoenolpyruvate carboxykinase (ATP) family. Monomer. It depends on Mn(2+) as a cofactor.

The protein resides in the cytoplasm. The enzyme catalyses oxaloacetate + ATP = phosphoenolpyruvate + ADP + CO2. Its pathway is carbohydrate biosynthesis; gluconeogenesis. Involved in the gluconeogenesis. Catalyzes the conversion of oxaloacetate (OAA) to phosphoenolpyruvate (PEP) through direct phosphoryl transfer between the nucleoside triphosphate and OAA. This Escherichia fergusonii (strain ATCC 35469 / DSM 13698 / CCUG 18766 / IAM 14443 / JCM 21226 / LMG 7866 / NBRC 102419 / NCTC 12128 / CDC 0568-73) protein is Phosphoenolpyruvate carboxykinase (ATP).